A 970-amino-acid chain; its full sequence is Villin-3 (970 aa).

Gelsolin-like repeat units follow at residues 31–111 (AVPV…ERFL), 151–219 (TVHV…EDGK), 273–339 (VLTR…TVIF), 416–484 (KFYS…PAEF), 536–576 (AIQV…QELA), and 643–714 (NFTQ…PQFF). The segment at 741-908 (DGVKPKLDKP…EGQPENEEGL (168 aa)) is disordered. Positions 755-778 (TTSSSHTGRSSVPEKSQRSRSMSF) are enriched in polar residues. Over residues 833–842 (AASIAAISAS) the composition is skewed to low complexity. Residues 878–893 (KDSTPSKDSPTVTPTI) show a composition bias toward polar residues. Residues 905–970 (EEGLPVYPYE…NRLKIALQLF (66 aa)) form the HP domain.

The protein belongs to the villin/gelsolin family. As to expression, expressed in roots, young leaves, and inflorescences, mostly in the vasculature of roots, leaves, and filaments of the anthers and in epidermal cells of the elongation zone and root hairs. Also detected in guard cells.

The protein localises to the cytoplasm. Its subcellular location is the cytoskeleton. In terms of biological role, ca(2+)-regulated actin-binding protein. Binds actin microfilaments (MFs). Involved in actin filament bundling, severing and capping. Caps the barbed end of actin filaments and is able to sever them in a calcium-dependent manner. MF severing is promoted by VLN1. The protein is Villin-3 of Oryza sativa subsp. japonica (Rice).